The primary structure comprises 421 residues: C2 calcium-dependent domain-containing protein 4C (421 aa).

Disordered stretches follow at residues 13 to 97 (RGSG…AKLA), 119 to 140 (DWLS…SLPS), 158 to 228 (HTRR…SPFG), and 250 to 303 (VSQL…TVHV). The span at 215-228 (ESDTGSSAESSPFG) shows a compositional bias: polar residues. A phosphoserine mark is found at Ser-262, Ser-264, and Ser-273. One can recognise a C2 domain in the interval 305 to 421 (PRGSVRLLAE…LPLTSLLPFL (117 aa)).

It belongs to the C2CD4 family.

In Homo sapiens (Human), this protein is C2 calcium-dependent domain-containing protein 4C (C2CD4C).